A 286-amino-acid chain; its full sequence is Divergent deoxyribose-phosphate aldolase-like protein (286 aa).

Homodimer. Interacts with ADF; the interaction enhances ADF activity in disassembly of filamentous actin and inhibition of actin polymerization.

The protein resides in the cytoplasm. Functionally, involved in regulation of actin dynamics. The protein is Divergent deoxyribose-phosphate aldolase-like protein of Toxoplasma gondii.